Consider the following 323-residue polypeptide: tRNA U34 carboxymethyltransferase (323 aa).

Residues Lys-91, Trp-105, Lys-110, Gly-130, 152–154, 181–182, Met-196, Tyr-200, and Arg-315 each bind carboxy-S-adenosyl-L-methionine; these read DPT and IE.

This sequence belongs to the class I-like SAM-binding methyltransferase superfamily. CmoB family. Homotetramer.

It carries out the reaction carboxy-S-adenosyl-L-methionine + 5-hydroxyuridine(34) in tRNA = 5-carboxymethoxyuridine(34) in tRNA + S-adenosyl-L-homocysteine + H(+). Its function is as follows. Catalyzes carboxymethyl transfer from carboxy-S-adenosyl-L-methionine (Cx-SAM) to 5-hydroxyuridine (ho5U) to form 5-carboxymethoxyuridine (cmo5U) at position 34 in tRNAs. The polypeptide is tRNA U34 carboxymethyltransferase (Escherichia coli O6:H1 (strain CFT073 / ATCC 700928 / UPEC)).